The chain runs to 38 residues: Cytochrome b6-f complex subunit 5 (38 aa).

The chain crosses the membrane as a helical span at residues 5-25; sequence LVLGLVMGLVPITLAGLFVAA.

The protein belongs to the PetG family. The 4 large subunits of the cytochrome b6-f complex are cytochrome b6, subunit IV (17 kDa polypeptide, PetD), cytochrome f and the Rieske protein, while the 4 small subunits are PetG, PetL, PetM and PetN. The complex functions as a dimer.

Its subcellular location is the cellular thylakoid membrane. In terms of biological role, component of the cytochrome b6-f complex, which mediates electron transfer between photosystem II (PSII) and photosystem I (PSI), cyclic electron flow around PSI, and state transitions. PetG is required for either the stability or assembly of the cytochrome b6-f complex. In Gloeothece citriformis (strain PCC 7424) (Cyanothece sp. (strain PCC 7424)), this protein is Cytochrome b6-f complex subunit 5.